The sequence spans 591 residues: Aspartate--tRNA(Asp/Asn) ligase (591 aa).

Residue Glu-176 participates in L-aspartate binding. The aspartate stretch occupies residues Gln-200 to Lys-203. Position 222 (Arg-222) interacts with L-aspartate. Residues Arg-222 to Glu-224 and Gln-231 contribute to the ATP site. His-450 is a binding site for L-aspartate. Glu-484 provides a ligand contact to ATP. Arg-491 provides a ligand contact to L-aspartate. Gly-536–Arg-539 contributes to the ATP binding site.

The protein belongs to the class-II aminoacyl-tRNA synthetase family. Type 1 subfamily. As to quaternary structure, homodimer.

The protein resides in the cytoplasm. It carries out the reaction tRNA(Asx) + L-aspartate + ATP = L-aspartyl-tRNA(Asx) + AMP + diphosphate. Functionally, aspartyl-tRNA synthetase with relaxed tRNA specificity since it is able to aspartylate not only its cognate tRNA(Asp) but also tRNA(Asn). Reaction proceeds in two steps: L-aspartate is first activated by ATP to form Asp-AMP and then transferred to the acceptor end of tRNA(Asp/Asn). This chain is Aspartate--tRNA(Asp/Asn) ligase, found in Bacillus cereus (strain AH187).